A 1347-amino-acid polypeptide reads, in one-letter code: Protocadherin-11 X-linked (1347 aa).

The first 23 residues, 1–23 (MDLLSGTYIFAVLLACVVFHSGA), serve as a signal peptide directing secretion. Topologically, residues 24–812 (QEKNYTIREE…VSSPTSDYVK (789 aa)) are extracellular. 7 consecutive Cadherin domains span residues 26-139 (KNYT…APLF), 140-249 (PATV…HPVF), 250-355 (KETE…VPSI), 362-466 (NPVN…APVF), 467-570 (TQSF…SPVF), 571-673 (THNE…KPVF), and 677-795 (PSNY…APVT). Asparagine 27, asparagine 48, and asparagine 54 each carry an N-linked (GlcNAc...) asparagine glycan. Residue asparagine 344 is glycosylated (N-linked (GlcNAc...) asparagine). N-linked (GlcNAc...) asparagine glycosylation occurs at asparagine 553. Residue asparagine 773 is glycosylated (N-linked (GlcNAc...) asparagine). A helical membrane pass occupies residues 813 to 833 (ILVAAVAGTITVVVVIFITAV). Topologically, residues 834-1347 (VRCRQAPHLK…DSPVMEEHPL (514 aa)) are cytoplasmic. Disordered regions lie at residues 1057–1091 (LPEG…GYPQ), 1097–1116 (RATP…ESTF), and 1325–1347 (TFTP…EHPL).

The protein resides in the cell membrane. Potential calcium-dependent cell-adhesion protein. This chain is Protocadherin-11 X-linked (PCDH11X), found in Pan troglodytes (Chimpanzee).